The sequence spans 440 residues: Mitochondrial translation factor 2 (440 aa).

Residues 1–15 constitute a mitochondrion transit peptide; the sequence is MIRTSSILKNCNYRY.

It is found in the mitochondrion matrix. Required for the processing and/or for the stability of the CYTB and COX1 intron-containing pre-mRNAs and of the ATP6 transcript. Could be a stem-loop RNA-binding protein that plays a role in determining RNA stability. The protein is Mitochondrial translation factor 2 (MTF2) of Saccharomyces cerevisiae (strain ATCC 204508 / S288c) (Baker's yeast).